The primary structure comprises 145 residues: Large ribosomal subunit protein uL15 (145 aa).

Positions 1–13 (MIRSKRKINKLRG) are enriched in basic residues. Residues 1–44 (MIRSKRKINKLRGSRSNGGGCTKKRRGAGNKGGRGNAGASKQHW) are disordered.

The protein belongs to the universal ribosomal protein uL15 family. In terms of assembly, part of the 50S ribosomal subunit.

Binds to the 23S rRNA. The polypeptide is Large ribosomal subunit protein uL15 (Methanobrevibacter smithii (strain ATCC 35061 / DSM 861 / OCM 144 / PS)).